A 303-amino-acid polypeptide reads, in one-letter code: Aspartate carbamoyltransferase catalytic subunit (303 aa).

2 residues coordinate carbamoyl phosphate: Arg51 and Thr52. Lys80 provides a ligand contact to L-aspartate. Residues Arg101, His129, and Gln132 each coordinate carbamoyl phosphate. L-aspartate-binding residues include Arg162 and Arg221. Residues Leu260 and Pro261 each coordinate carbamoyl phosphate.

This sequence belongs to the aspartate/ornithine carbamoyltransferase superfamily. ATCase family. In terms of assembly, heterooligomer of catalytic and regulatory chains.

The enzyme catalyses carbamoyl phosphate + L-aspartate = N-carbamoyl-L-aspartate + phosphate + H(+). It functions in the pathway pyrimidine metabolism; UMP biosynthesis via de novo pathway; (S)-dihydroorotate from bicarbonate: step 2/3. Catalyzes the condensation of carbamoyl phosphate and aspartate to form carbamoyl aspartate and inorganic phosphate, the committed step in the de novo pyrimidine nucleotide biosynthesis pathway. The chain is Aspartate carbamoyltransferase catalytic subunit from Saccharolobus solfataricus (strain ATCC 35092 / DSM 1617 / JCM 11322 / P2) (Sulfolobus solfataricus).